A 152-amino-acid chain; its full sequence is Ribosome maturation factor RimP (152 aa).

Belongs to the RimP family.

Its subcellular location is the cytoplasm. Its function is as follows. Required for maturation of 30S ribosomal subunits. The chain is Ribosome maturation factor RimP from Pseudothermotoga lettingae (strain ATCC BAA-301 / DSM 14385 / NBRC 107922 / TMO) (Thermotoga lettingae).